The following is a 571-amino-acid chain: Carboxylesterase 3B (571 aa).

The first 31 residues, 1 to 31, serve as a signal peptide directing secretion; sequence MTNMRTMIPAGSSVLVWVTCLLLAFVTTVTG. Cys-100 and Cys-127 form a disulfide bridge. The Acyl-ester intermediate role is filled by Ser-232. Cys-284 and Cys-295 are oxidised to a cystine. Residue Asn-311 is glycosylated (N-linked (GlcNAc...) asparagine). Catalysis depends on charge relay system residues Glu-347 and His-460. The short motif at 568–571 is the Prevents secretion from ER element; it reads PEEL.

The protein belongs to the type-B carboxylesterase/lipase family.

Its subcellular location is the endoplasmic reticulum lumen. The enzyme catalyses a carboxylic ester + H2O = an alcohol + a carboxylate + H(+). Its function is as follows. Involved in the detoxification of xenobiotics and in the activation of ester and amide prodrugs. The protein is Carboxylesterase 3B (Ces3b) of Mus musculus (Mouse).